A 264-amino-acid polypeptide reads, in one-letter code: Signal peptidase I (264 aa).

The Cytoplasmic portion of the chain corresponds to 1 to 18 (MNRDNINSNKTVKQEFGS). Residues 19–39 (FAFVICIALVIRILIMEPFTV) form a helical membrane-spanning segment. Residues 40 to 264 (PTGSMKATIL…IFKNLYNVDE (225 aa)) are Extracellular-facing. Catalysis depends on residues S43 and K106.

This sequence belongs to the peptidase S26 family.

It is found in the cell membrane. The catalysed reaction is Cleavage of hydrophobic, N-terminal signal or leader sequences from secreted and periplasmic proteins.. The polypeptide is Signal peptidase I (lepB) (Rickettsia prowazekii (strain Madrid E)).